A 351-amino-acid chain; its full sequence is MISYSVKQLASLVGGIVEGEPEIEITGISDILDAKKGQITFLSNPRYEAAVEKTQASAIVVSKSYKSSSPITLIRVDSPSLAFSQIISLFSPQPFSYEPGIHPTALIGREVEIGKEVSIQPYAVIEDKVKIGDGCVIGAYVFIGRESIIGEKSFFYPHVTIRERSRIGKRVILHPGAVIGSDGFGYEQTNGRHEKIPQVGIVQIDDDVEIGANTTVDRGRFGKTWIQEGCKIDNLVQIAHNVIIGKNSIIAAQTGISGSTSLGEHVTLAGQVGIAGHIHIGDGATITAQSGVTKDVPPRAVLSGRHARPINLTHKLEVLYNKLPELWERLKKLEKKYDGDSPRPEADPYNS.

His240 acts as the Proton acceptor in catalysis.

It belongs to the transferase hexapeptide repeat family. LpxD subfamily. As to quaternary structure, homotrimer.

The enzyme catalyses a UDP-3-O-[(3R)-3-hydroxyacyl]-alpha-D-glucosamine + a (3R)-hydroxyacyl-[ACP] = a UDP-2-N,3-O-bis[(3R)-3-hydroxyacyl]-alpha-D-glucosamine + holo-[ACP] + H(+). It participates in bacterial outer membrane biogenesis; LPS lipid A biosynthesis. Functionally, catalyzes the N-acylation of UDP-3-O-acylglucosamine using 3-hydroxyacyl-ACP as the acyl donor. Is involved in the biosynthesis of lipid A, a phosphorylated glycolipid that anchors the lipopolysaccharide to the outer membrane of the cell. This Methylacidiphilum infernorum (isolate V4) (Methylokorus infernorum (strain V4)) protein is UDP-3-O-acylglucosamine N-acyltransferase.